Reading from the N-terminus, the 690-residue chain is CREB-H transcription factor homolog let-607 (690 aa).

Disordered stretches follow at residues 87–118, 166–192, and 205–253; these read NDNCYSLSPPDSGSLPISPASTSPSSYHSSGG, SAVHQNQQQQQRRLNQAGFPHQNSNGL, and PASI…KYPP. Composition is skewed to low complexity over residues 100–116, 170–181, and 213–236; these read SLPISPASTSPSSYHSS, QNQQQQQRRLNQ, and PSSSFNPQSTSSTPATSSSSSSST. The bZIP domain occupies 284–347; that stretch reads DLKRIRRKIR…QSVISQLKKL (64 aa). Residues 286 to 321 form a basic motif region; the sequence is KRIRRKIRNKRSAQTSRKRKQDYIEQLEDRVSESTK. Residues 295–350 are a coiled coil; it reads KRSAQTSRKRKQDYIEQLEDRVSESTKENQALKQQIERLSSENQSVISQLKKLQAQ. A leucine-zipper region spans residues 326-333; that stretch reads LKQQIERL. Over residues 451–464 the composition is skewed to polar residues; sequence HNNSKYPASGNQNH. 2 disordered regions span residues 451 to 495 and 509 to 536; these read HNNS…SMYR and GARKGSSTSSSSASSVASSTSTSSATSP. Low complexity-rich tracts occupy residues 480 to 492 and 514 to 535; these read QPKQSYQQQHQPS and SSTSSSSASSVASSTSTSSATS.

This sequence belongs to the bZIP family.

The protein resides in the nucleus. Functionally, probable transcription factor, required during migration of the gonadal distal tip cells (DTC). Probably regulates cell adhesion of DTCs via modulation of expression of genes involved in integrin-mediated adhesion, including tln-1, src-1, and integrin pat-2. Modulates expression of genes involved in protein trafficking during embryogenesis, including emo-1, sec-61, calu-1, sec-24.1, enpl-1, sar-1 and tfg-1. In Caenorhabditis elegans, this protein is CREB-H transcription factor homolog let-607.